The following is a 321-amino-acid chain: Protease HtpX homolog (321 aa).

Transmembrane regions (helical) follow at residues 6-26 and 28-48; these read TAML…LIGG and GGMM…YWNS. His-130 lines the Zn(2+) pocket. Glu-131 is a catalytic residue. Residue His-134 participates in Zn(2+) binding. A run of 2 helical transmembrane segments spans residues 145-165 and 173-193; these read ITAT…FFGG and PLGF…AMLV. Glu-202 lines the Zn(2+) pocket. The segment at 281 to 321 is disordered; sequence EFSPRASTPPPSGDRPVRKSGSVPTTGWRRGNENERKGPWS. Residues 310–321 are compositionally biased toward basic and acidic residues; it reads RGNENERKGPWS.

Belongs to the peptidase M48B family. Zn(2+) serves as cofactor.

Its subcellular location is the cell inner membrane. In Agrobacterium fabrum (strain C58 / ATCC 33970) (Agrobacterium tumefaciens (strain C58)), this protein is Protease HtpX homolog.